The sequence spans 178 residues: Glucagon-2 (178 aa).

The first 21 residues, 1 to 21 (MFGIHSLAGVLLLVIVQSQLA), serve as a signal peptide directing secretion. Propeptides lie at residues 83–87 (SGAPS), 123–134 (ESAEESMNGPMS), and 171–178 (SNKRQEDH).

The protein belongs to the glucagon family.

Its subcellular location is the secreted. Functionally, promotes hydrolysis of glycogen and lipids, and raises the blood sugar level. The protein is Glucagon-2 (gcg2) of Oncorhynchus mykiss (Rainbow trout).